The sequence spans 236 residues: Alanyl-tRNA editing protein AlaX-M (236 aa).

Residues H101, H105, and H205 each contribute to the Zn(2+) site.

Belongs to the class-II aminoacyl-tRNA synthetase family. Editing domain AlaX-M subfamily. Requires Zn(2+) as cofactor.

It localises to the cytoplasm. Functions in trans to edit the amino acid moiety from incorrectly charged Ser-tRNA(Ala). The sequence is that of Alanyl-tRNA editing protein AlaX-M (alaXM) from Saccharolobus solfataricus (strain ATCC 35092 / DSM 1617 / JCM 11322 / P2) (Sulfolobus solfataricus).